Reading from the N-terminus, the 195-residue chain is Imidazoleglycerol-phosphate dehydratase (195 aa).

The protein belongs to the imidazoleglycerol-phosphate dehydratase family.

It localises to the cytoplasm. It carries out the reaction D-erythro-1-(imidazol-4-yl)glycerol 3-phosphate = 3-(imidazol-4-yl)-2-oxopropyl phosphate + H2O. Its pathway is amino-acid biosynthesis; L-histidine biosynthesis; L-histidine from 5-phospho-alpha-D-ribose 1-diphosphate: step 6/9. The chain is Imidazoleglycerol-phosphate dehydratase from Thermotoga maritima (strain ATCC 43589 / DSM 3109 / JCM 10099 / NBRC 100826 / MSB8).